The primary structure comprises 181 residues: MQNEIRQDKIIGSRRFSNYFWAFFLLVGGLGFLLAGISSYFKVNLLPFTNTTELVFIPQGLVMMFYGALSLGISIYTLLTIILDIGSGYNEYNRIENLVKVVRKGFPGKNREILLTYSLSNVRAIGIKITEGLNPTRSIYLCLKDERNIPLTPVQEPTAISNLEEEATDLAKFLDLRLENL.

The next 2 helical transmembrane spans lie at 19–39 (YFWA…GISS) and 62–82 (VMMF…LTII).

It belongs to the Ycf4 family.

The protein localises to the plastid. It localises to the chloroplast thylakoid membrane. Its function is as follows. Seems to be required for the assembly of the photosystem I complex. The polypeptide is Photosystem I assembly protein Ycf4 (Phaeodactylum tricornutum (strain CCAP 1055/1)).